The sequence spans 445 residues: Phosphoglucosamine mutase (445 aa).

Serine 100 (phosphoserine intermediate) is an active-site residue. Mg(2+)-binding residues include serine 100, aspartate 240, aspartate 242, and aspartate 244. Phosphoserine is present on serine 100.

It belongs to the phosphohexose mutase family. It depends on Mg(2+) as a cofactor. Post-translationally, activated by phosphorylation.

The enzyme catalyses alpha-D-glucosamine 1-phosphate = D-glucosamine 6-phosphate. Functionally, catalyzes the conversion of glucosamine-6-phosphate to glucosamine-1-phosphate. This chain is Phosphoglucosamine mutase, found in Pelotomaculum thermopropionicum (strain DSM 13744 / JCM 10971 / SI).